The following is a 301-amino-acid chain: Mitochondrial substrate carrier family protein X (301 aa).

Residues 1–23 (MVQQQQQQQQIKKNQVKPPLYSN) are Mitochondrial intermembrane-facing. Solcar repeat units follow at residues 18-109 (PPLY…FRTR), 117-199 (IKLW…MKHN), and 208-296 (IGLP…QKSF). Residues 24-44 (LIAGAIAGVIGSSVVFPLDFV) traverse the membrane as a helical segment. The Mitochondrial matrix segment spans residues 45–75 (KTRLQQQRVSIDGSKQYNGIIDCFKKVIKNE). A helical membrane pass occupies residues 76–97 (GGVRGLYRGLSSNLIGIIPEKA). Residues 98-122 (LKLAMNDYFRTRFQGDRSYIKLWEE) are Mitochondrial intermembrane-facing. A helical membrane pass occupies residues 123-143 (VASGGLAGMCQVVATNPMELV). Over 144 to 173 (KIRMQVSGLSGKKASLKEVVSELGIKGLYK) the chain is Mitochondrial matrix. Residues 174–194 (GTASTLLRDVPFSMIYFSIYG) traverse the membrane as a helical segment. Residues 195–207 (RMKHNLTDQETGE) lie on the Mitochondrial intermembrane side of the membrane. Residues 208-228 (IGLPKILLCGITAGSIAASVS) traverse the membrane as a helical segment. Topologically, residues 229-271 (TPFDVIKTRIQVKPGPNDPHYKGIADCFRKTIQSEGPKALFKG) are mitochondrial matrix. The helical transmembrane segment at 272–292 (VLPRVCIISPLFGITLVVYEI) threads the bilayer. The Mitochondrial intermembrane portion of the chain corresponds to 293–301 (QKSFYASTH).

The protein belongs to the mitochondrial carrier (TC 2.A.29) family.

The protein localises to the mitochondrion inner membrane. In terms of biological role, mitochondrial solute carriers shuttle metabolites, nucleotides, and cofactors through the mitochondrial inner membrane. The polypeptide is Mitochondrial substrate carrier family protein X (mcfX) (Dictyostelium discoideum (Social amoeba)).